Reading from the N-terminus, the 175-residue chain is Regenerating islet-derived protein 3-gamma (175 aa).

Residues Met1–Gly26 form the signal peptide. Positions Glu27 to Arg37 are excised as a propeptide. Cystine bridges form between Cys40–Cys51, Cys68–Cys171, and Cys146–Cys163. In terms of domain architecture, C-type lectin spans Tyr47–Lys172. A sufficient to activate EXTL3 region spans residues Trp103–Asp118. His107 is a binding site for Zn(2+). The EPN motif lies at Glu114–Asp116. Zn(2+) contacts are provided by Glu121 and His145.

As to quaternary structure, forms a hexameric membrane-permeabilizing oligomeric pore on membrane phospholipids. The hexamer is formed by three dimers related by helical symmetry. Forms filaments, filamentation traps pore complexes and limits damage to host cells. Interacts with EXTL3. Proteolytic processing by trypsin removes an inhibitory N-terminal propeptide and is essential for peptidoglycan binding and antibacterial activity. In terms of tissue distribution, predominantly expressed in pancreas, where it may be restricted to exocrine pancreas. Moderate expression levels in testis and weak in heart, kidney and placenta.

The protein resides in the secreted. It is found in the cytoplasm. With respect to regulation, lipopolysaccharide inhibits pore-forming activity, explaining why is bactericidal for Gram-positive but not Gram-negative bacteria. Bactericidal C-type lectin which acts exclusively against Gram-positive bacteria and mediates bacterial killing by binding to surface-exposed carbohydrate moieties of peptidoglycan. Restricts bacterial colonization of the intestinal epithelial surface and consequently limits activation of adaptive immune responses by the microbiota. Its function is as follows. Acts as a hormone in response to different stimuli like anti-inflammatory signals, such as IL17A, or gut microbiome. Is secreted by different cell types to activate its receptor EXTL3 and induce cell specific signaling pathways. Induced by IL17A in keratinocytes, regulates keratinocyte proliferation and differentiation after skin injury. In parallel, inhibits skin inflammation through the inhibition of inflammatory cytokines such as IL6 and TNF. Induced by IL22 in lung epithelial cells, inhibits cytokine production and regulates allergic airway inflammation. Induced in small intestine by inulin-enriched diet and Lactobacillus gasseri enriched microbiome, plays a role in the improvement of gut barrier function, the regulation of energy balance and glucose levels. Modulates microbiota composition in duodenal contents. Produced by nociceptor in response to endotoxins, prevents endotoxic death by targeting kynurenine pathway in microglia. Functionally, has bacteriostatic activity. In terms of biological role, has bactericidal activity against L.monocytogenes and methicillin-resistant S.aureus. In Homo sapiens (Human), this protein is Regenerating islet-derived protein 3-gamma.